Consider the following 121-residue polypeptide: Large ribosomal subunit protein uL18 (121 aa).

This sequence belongs to the universal ribosomal protein uL18 family. As to quaternary structure, part of the 50S ribosomal subunit; part of the 5S rRNA/L5/L18/L25 subcomplex. Contacts the 5S and 23S rRNAs.

Its function is as follows. This is one of the proteins that bind and probably mediate the attachment of the 5S RNA into the large ribosomal subunit, where it forms part of the central protuberance. The polypeptide is Large ribosomal subunit protein uL18 (Verminephrobacter eiseniae (strain EF01-2)).